The following is a 286-amino-acid chain: UDP-3-O-acyl-N-acetylglucosamine deacetylase (286 aa).

The Zn(2+) site is built by H81, H240, and D244. H266 functions as the Proton donor in the catalytic mechanism.

Belongs to the LpxC family. It depends on Zn(2+) as a cofactor.

The catalysed reaction is a UDP-3-O-[(3R)-3-hydroxyacyl]-N-acetyl-alpha-D-glucosamine + H2O = a UDP-3-O-[(3R)-3-hydroxyacyl]-alpha-D-glucosamine + acetate. It functions in the pathway glycolipid biosynthesis; lipid IV(A) biosynthesis; lipid IV(A) from (3R)-3-hydroxytetradecanoyl-[acyl-carrier-protein] and UDP-N-acetyl-alpha-D-glucosamine: step 2/6. Its function is as follows. Catalyzes the hydrolysis of UDP-3-O-myristoyl-N-acetylglucosamine to form UDP-3-O-myristoylglucosamine and acetate, the committed step in lipid A biosynthesis. The protein is UDP-3-O-acyl-N-acetylglucosamine deacetylase of Francisella tularensis subsp. tularensis (strain FSC 198).